The chain runs to 771 residues: Tetratricopeptide repeat-containing protein trd-1 (771 aa).

6 TPR repeats span residues 389–415 (LEMWDGVIDCYKQLGQMDKAETLIRRL), 416–449 (IEQKPNDSMLHVYLGDITRNLEYFTKAIELSDDR), 451–484 (ARAHRSLGHLLLMDKKFEEAYKHLRRSLELQPIQ), 485–518 (LGTWFNAGYCAWKLENFKESTQCYHRCVSLQPDH), 520–552 (EAWNNLSAAYIRHGQKPKAWKLLQEALKYNYEH), and 553–586 (PNVWENYMLLSVDVGEFSQAIQAYHRLLDMNKRG).

The protein belongs to the TTC27 family. Expressed in the spermatheca.

It localises to the cytoplasm. Developmental protein required for cell fate determination in both the germline and seam cells of the developing epidermis. Specifically, involved in sex determination and may function in parallel or downstream of other sex determination factors, including tra-2 and fem-3, to promote oogenesis in its role in the regulation of the switch from spermatogenesis to oogenesis in the gonads. Also implicated in the mitosis to meiosis switch in distal tip cells. This Caenorhabditis elegans protein is Tetratricopeptide repeat-containing protein trd-1.